A 274-amino-acid polypeptide reads, in one-letter code: Dermonecrotic toxin SdSicTox-betaIIB1aii (274 aa).

Residue His5 is part of the active site. Positions 25 and 27 each coordinate Mg(2+). The active-site Nucleophile is the His41. Disulfide bonds link Cys45-Cys51 and Cys47-Cys190. Asp85 contacts Mg(2+).

It belongs to the arthropod phospholipase D family. Class II subfamily. The cofactor is Mg(2+). As to expression, expressed by the venom gland.

The protein localises to the secreted. The catalysed reaction is an N-(acyl)-sphingosylphosphocholine = an N-(acyl)-sphingosyl-1,3-cyclic phosphate + choline. The enzyme catalyses an N-(acyl)-sphingosylphosphoethanolamine = an N-(acyl)-sphingosyl-1,3-cyclic phosphate + ethanolamine. It catalyses the reaction a 1-acyl-sn-glycero-3-phosphocholine = a 1-acyl-sn-glycero-2,3-cyclic phosphate + choline. It carries out the reaction a 1-acyl-sn-glycero-3-phosphoethanolamine = a 1-acyl-sn-glycero-2,3-cyclic phosphate + ethanolamine. In terms of biological role, dermonecrotic toxins cleave the phosphodiester linkage between the phosphate and headgroup of certain phospholipids (sphingolipid and lysolipid substrates), forming an alcohol (often choline) and a cyclic phosphate. This toxin acts on sphingomyelin (SM). It may also act on ceramide phosphoethanolamine (CPE), lysophosphatidylcholine (LPC) and lysophosphatidylethanolamine (LPE), but not on lysophosphatidylserine (LPS), and lysophosphatidylglycerol (LPG). It acts by transphosphatidylation, releasing exclusively cyclic phosphate products as second products. Induces dermonecrosis, hemolysis, increased vascular permeability, edema, inflammatory response, and platelet aggregation. The sequence is that of Dermonecrotic toxin SdSicTox-betaIIB1aii from Sicarius cf. damarensis (strain GJB-2008) (Six-eyed sand spider).